The sequence spans 238 residues: 7-cyano-7-deazaguanine synthase (238 aa).

12–22 (FSGGQDSGTCL) lines the ATP pocket. Zn(2+) is bound by residues Cys200, Cys215, Cys218, and Cys221.

It belongs to the QueC family. The cofactor is Zn(2+).

The enzyme catalyses 7-carboxy-7-deazaguanine + NH4(+) + ATP = 7-cyano-7-deazaguanine + ADP + phosphate + H2O + H(+). It functions in the pathway purine metabolism; 7-cyano-7-deazaguanine biosynthesis. Its function is as follows. Catalyzes the ATP-dependent conversion of 7-carboxy-7-deazaguanine (CDG) to 7-cyano-7-deazaguanine (preQ(0)). This is 7-cyano-7-deazaguanine synthase from Lawsonia intracellularis (strain PHE/MN1-00).